A 153-amino-acid polypeptide reads, in one-letter code: Large ribosomal subunit protein uL30 (153 aa).

This sequence belongs to the universal ribosomal protein uL30 family. As to quaternary structure, part of the 50S ribosomal subunit.

The sequence is that of Large ribosomal subunit protein uL30 from Metallosphaera sedula (strain ATCC 51363 / DSM 5348 / JCM 9185 / NBRC 15509 / TH2).